The primary structure comprises 181 residues: Large ribosomal subunit protein uL10 (181 aa).

This sequence belongs to the universal ribosomal protein uL10 family. Part of the ribosomal stalk of the 50S ribosomal subunit. The N-terminus interacts with L11 and the large rRNA to form the base of the stalk. The C-terminus forms an elongated spine to which L12 dimers bind in a sequential fashion forming a multimeric L10(L12)X complex.

Functionally, forms part of the ribosomal stalk, playing a central role in the interaction of the ribosome with GTP-bound translation factors. This is Large ribosomal subunit protein uL10 from Amoebophilus asiaticus (strain 5a2).